We begin with the raw amino-acid sequence, 471 residues long: ATP synthase subunit beta (471 aa).

Residue 154–161 participates in ATP binding; it reads GGAGVGKT.

The protein belongs to the ATPase alpha/beta chains family. In terms of assembly, F-type ATPases have 2 components, CF(1) - the catalytic core - and CF(0) - the membrane proton channel. CF(1) has five subunits: alpha(3), beta(3), gamma(1), delta(1), epsilon(1). CF(0) has three main subunits: a(1), b(2) and c(9-12). The alpha and beta chains form an alternating ring which encloses part of the gamma chain. CF(1) is attached to CF(0) by a central stalk formed by the gamma and epsilon chains, while a peripheral stalk is formed by the delta and b chains.

The protein localises to the cell membrane. It carries out the reaction ATP + H2O + 4 H(+)(in) = ADP + phosphate + 5 H(+)(out). Functionally, produces ATP from ADP in the presence of a proton gradient across the membrane. The catalytic sites are hosted primarily by the beta subunits. This chain is ATP synthase subunit beta, found in Mesomycoplasma hyopneumoniae (strain J / ATCC 25934 / NCTC 10110) (Mycoplasma hyopneumoniae).